A 211-amino-acid chain; its full sequence is Leucyl/phenylalanyl-tRNA--protein transferase (211 aa).

The protein belongs to the L/F-transferase family.

It localises to the cytoplasm. It catalyses the reaction N-terminal L-lysyl-[protein] + L-leucyl-tRNA(Leu) = N-terminal L-leucyl-L-lysyl-[protein] + tRNA(Leu) + H(+). The catalysed reaction is N-terminal L-arginyl-[protein] + L-leucyl-tRNA(Leu) = N-terminal L-leucyl-L-arginyl-[protein] + tRNA(Leu) + H(+). The enzyme catalyses L-phenylalanyl-tRNA(Phe) + an N-terminal L-alpha-aminoacyl-[protein] = an N-terminal L-phenylalanyl-L-alpha-aminoacyl-[protein] + tRNA(Phe). Functions in the N-end rule pathway of protein degradation where it conjugates Leu, Phe and, less efficiently, Met from aminoacyl-tRNAs to the N-termini of proteins containing an N-terminal arginine or lysine. This is Leucyl/phenylalanyl-tRNA--protein transferase from Flavobacterium psychrophilum (strain ATCC 49511 / DSM 21280 / CIP 103535 / JIP02/86).